Consider the following 393-residue polypeptide: (S)-mandelate dehydrogenase (393 aa).

Positions 1-377 (MSQNLFNVED…SPDYLQNEGV (377 aa)) constitute an FMN hydroxy acid dehydrogenase domain. Tyr-26 serves as a coordination point for (S)-mandelate. FMN is bound by residues 79 to 81 (PTG), Ser-108, and Gln-129. Position 131 (Tyr-131) interacts with (S)-mandelate. An FMN-binding site is contributed by Thr-156. Arg-165 is a (S)-mandelate binding site. Position 250 (Lys-250) interacts with FMN. (S)-mandelate is bound by residues His-274 and Arg-277. Catalysis depends on His-274, which acts as the Proton acceptor. Residues 303-307 (DSGFR) and 326-327 (GR) contribute to the FMN site.

The protein belongs to the FMN-dependent alpha-hydroxy acid dehydrogenase family. Homotetramer. Requires FMN as cofactor.

The protein localises to the cell inner membrane. The catalysed reaction is (S)-mandelate + A = phenylglyoxylate + AH2. It participates in aromatic compound metabolism; (R)-mandelate degradation; benzoate from (R)-mandelate: step 2/4. Functionally, catalyzes the dehydrogenation of (S)-mandelate to phenylglyoxylate (benzoylformate). Is likely involved in the utilization of mandelate as a sole source of carbon and energy for growth. Active in vitro with the artificial electron acceptors 2,6-dichlorophenolindophenol (DCPIP) or ferricyanide, but in vivo most likely transfer the electron pair from the reduced flavin to a component of the electron transport chain in the membrane, possibly a quinone. Shows very low activity with oxygen as the electron acceptor, and also with 3-indolelactate and medium chain 2-hydroxyacids as substrates. The polypeptide is (S)-mandelate dehydrogenase (Pseudomonas putida (Arthrobacter siderocapsulatus)).